The chain runs to 454 residues: L-serine dehydratase TdcG (454 aa).

This sequence belongs to the iron-sulfur dependent L-serine dehydratase family. [4Fe-4S] cluster is required as a cofactor.

The enzyme catalyses L-serine = pyruvate + NH4(+). It participates in amino-acid degradation; L-threonine degradation via propanoate pathway. This chain is L-serine dehydratase TdcG (tdcG), found in Escherichia coli (strain K12).